The chain runs to 93 residues: MKAILLLAIFSVLTVAICGVSQNYGNVRYNYTELPNGEYCYIPRRRCVTTEQCCKPYDTVNNFAACGMAWPEDKKRKVNKCYICDNELTLCTR.

Residues 1-18 (MKAILLLAIFSVLTVAIC) form the signal peptide. Disulfide bonds link Cys-40–Cys-54, Cys-40–Cys-81, Cys-53–Cys-66, and Cys-84–Cys-91.

It belongs to the neurotoxin 27 (Jztx-72) family. ICK-72 subfamily. As to expression, expressed by the venom gland.

The protein resides in the secreted. Its function is as follows. Probable neurotoxin with ion channel impairing activity. The chain is U8-theraphotoxin-Hs1b from Cyriopagopus schmidti (Chinese bird spider).